A 413-amino-acid polypeptide reads, in one-letter code: Palmitoyltransferase ZDHHC6 (413 aa).

Residues 1–24 lie on the Cytoplasmic side of the membrane; sequence MGTFCSVIKFENLQELKRLCHWGP. Residues 25–45 form a helical membrane-spanning segment; sequence IIALGVIAICSTMAMIDSVLW. At 46-57 the chain is on the lumenal side; the sequence is YWPLHTTGGSVN. A helical membrane pass occupies residues 58–78; sequence FIMLINWTVMILYNYFNAMFV. Residues 79-143 lie on the Cytoplasmic side of the membrane; that stretch reads GPGFVPLGWK…NCCGYQNHAS (65 aa). Residues 99 to 149 form the DHHC domain; the sequence is QYCKVCQAYKAPRSHHCRKCNRCVMKMDHHCPWINNCCGYQNHASFTLFLL. C129 acts as the S-palmitoyl cysteine intermediate in catalysis. Residues 144–164 form a helical membrane-spanning segment; that stretch reads FTLFLLLAPLGCIHAAFIFVM. Residues 165–205 are Lumenal-facing; that stretch reads TMYTQLYHRLSFGWNTVKIDMSAARRDPLPIVPFGLAAFAT. Residues 206-226 traverse the membrane as a helical segment; sequence TLFALGLALGTTIAVGMLFFI. The Cytoplasmic portion of the chain corresponds to 227 to 413; it reads QMKIILRNKT…QAPEGEKKNR (187 aa). One can recognise an SH3 domain in the interval 313-398; the sequence is VRSVRYKVIE…PRKCVEKCPC (86 aa). S-palmitoyl cysteine attachment occurs at residues C328, C329, and C343. A Di-lysine motif motif is present at residues 410-413; sequence KKNR.

This sequence belongs to the DHHC palmitoyltransferase family. In terms of assembly, homooligomerizes. Interacts with SELENOK. Palmitoylated at 3 different sites by ZDHHC16. The combination of the different palmitoylation events strongly affects the quaternary assembly of ZDHHC6, its localization, stability and function. Palmitoylation at Cys-328 accelerates the turnover of ZDHHC6. Depalmitoylated by LYPLA2.

It localises to the endoplasmic reticulum membrane. It catalyses the reaction L-cysteinyl-[protein] + hexadecanoyl-CoA = S-hexadecanoyl-L-cysteinyl-[protein] + CoA. It carries out the reaction L-cysteinyl-[protein] + octadecanoyl-CoA = S-octadecanoyl-L-cysteinyl-[protein] + CoA. In terms of biological role, endoplasmic reticulum palmitoyl acyltransferase that mediates palmitoylation of proteins such as AMFR, CALX, ITPR1 and TFRC. Palmitoylates calnexin (CALX), which is required for its association with the ribosome-translocon complex and efficient folding of glycosylated proteins. Mediates palmitoylation of AMFR, promoting AMFR distribution to the peripheral endoplasmic reticulum. Together with SELENOK, palmitoylates ITPR1 in immune cells, leading to regulate ITPR1 stability and function. Stearoyltransferase that mediates stearoylation of TFRC to inhibit TFRC-mediated activation of the JNK pathway and mitochondrial fragmentation. The protein is Palmitoyltransferase ZDHHC6 of Homo sapiens (Human).